Here is a 173-residue protein sequence, read N- to C-terminus: Crossover junction endodeoxyribonuclease RuvC (173 aa).

Residues D8, E67, and D139 contribute to the active site. Positions 8, 67, and 139 each coordinate Mg(2+).

Belongs to the RuvC family. In terms of assembly, homodimer which binds Holliday junction (HJ) DNA. The HJ becomes 2-fold symmetrical on binding to RuvC with unstacked arms; it has a different conformation from HJ DNA in complex with RuvA. In the full resolvosome a probable DNA-RuvA(4)-RuvB(12)-RuvC(2) complex forms which resolves the HJ. The cofactor is Mg(2+).

The protein resides in the cytoplasm. It catalyses the reaction Endonucleolytic cleavage at a junction such as a reciprocal single-stranded crossover between two homologous DNA duplexes (Holliday junction).. Functionally, the RuvA-RuvB-RuvC complex processes Holliday junction (HJ) DNA during genetic recombination and DNA repair. Endonuclease that resolves HJ intermediates. Cleaves cruciform DNA by making single-stranded nicks across the HJ at symmetrical positions within the homologous arms, yielding a 5'-phosphate and a 3'-hydroxyl group; requires a central core of homology in the junction. The consensus cleavage sequence is 5'-(A/T)TT(C/G)-3'. Cleavage occurs on the 3'-side of the TT dinucleotide at the point of strand exchange. HJ branch migration catalyzed by RuvA-RuvB allows RuvC to scan DNA until it finds its consensus sequence, where it cleaves and resolves the cruciform DNA. In Vibrio vulnificus (strain CMCP6), this protein is Crossover junction endodeoxyribonuclease RuvC.